The chain runs to 473 residues: MSFSRRQFIQVSGLAMCIGAAPLLVRASKNQQTALPVPPLLESRGGQPLFLTLQKAHWTFDGQYKTSVWGINGQYLGPTIRVHKNDDVKLIYSNRLAEPVSMTVSGLQLPGTLTGGVARQISPGSDWSPVLPIRQQAATCWYHANTPNRMAPHVYKGLAGMWLVEDETSRHLPLPKHYGVNDFPVILQDKRLDNFGVPEYQPASDSGFIGNTLLVNGVQNPFIEVSRGWIRLRLLNASNARRYQLQIGDGRPFYMIGTDLGLLPAPIAVQQLSLAPGERREVLIDMSKEDEVVVTAGESAGVLDKLRGLFEPSTVLISSTVLTIKATGLLSLVTDNLPSRLIDDVTPVSSVIRNREIYLDDNTPGINGALWDMNRVDITSQQGTWERWIVNASAPQPFHIEGVQFKLINHNGEAPQPQDYGWKDTVWVDGRVELLVYMNQPSYEHFPFLYYSQILEMADRGSVGQLVTIPVNQ.

Residues 1-27 (MSFSRRQFIQVSGLAMCIGAAPLLVRA) constitute a signal peptide (tat-type signal).

It belongs to the FtsP family. In terms of processing, predicted to be exported by the Tat system. The position of the signal peptide cleavage has not been experimentally proven.

The protein resides in the periplasm. Functionally, cell division protein that is required for growth during stress conditions. May be involved in protecting or stabilizing the divisomal assembly under conditions of stress. The protein is Cell division protein FtsP of Photorhabdus laumondii subsp. laumondii (strain DSM 15139 / CIP 105565 / TT01) (Photorhabdus luminescens subsp. laumondii).